The sequence spans 479 residues: UDP-glycosyltransferase 85A5 (479 aa).

Residues Ser301, 358–360 (CPQ), 375–383 (HSGWNSTLE), and 397–400 (FAEQ) each bind UDP-alpha-D-glucose.

Belongs to the UDP-glycosyltransferase family. Expressed in roots, shoots and leaves.

The polypeptide is UDP-glycosyltransferase 85A5 (UGT85A5) (Arabidopsis thaliana (Mouse-ear cress)).